A 1025-amino-acid chain; its full sequence is Error-prone DNA polymerase (1025 aa).

The protein belongs to the DNA polymerase type-C family. DnaE2 subfamily.

The protein resides in the cytoplasm. It catalyses the reaction DNA(n) + a 2'-deoxyribonucleoside 5'-triphosphate = DNA(n+1) + diphosphate. Functionally, DNA polymerase involved in damage-induced mutagenesis and translesion synthesis (TLS). It is not the major replicative DNA polymerase. This chain is Error-prone DNA polymerase, found in Pseudomonas fluorescens (strain Pf0-1).